We begin with the raw amino-acid sequence, 399 residues long: V-set and immunoglobulin domain-containing protein 4 (399 aa).

The N-terminal stretch at Met-1–Gly-19 is a signal peptide. Topologically, residues Arg-20–Pro-283 are extracellular. Ig-like domains lie at Pro-21–Thr-131 and Pro-143–Val-226. Intrachain disulfides connect Cys-41/Cys-113 and Cys-165/Cys-211. Residues Val-284–Ile-304 traverse the membrane as a helical segment. The Cytoplasmic segment spans residues Met-305 to Cys-399.

In terms of tissue distribution, abundantly expressed in several fetal tissues. In adult tissues, highest expression in lung and placenta. Expressed in resting macrophages.

Its subcellular location is the membrane. In terms of biological role, phagocytic receptor, strong negative regulator of T-cell proliferation and IL2 production. Potent inhibitor of the alternative complement pathway convertases. The polypeptide is V-set and immunoglobulin domain-containing protein 4 (VSIG4) (Homo sapiens (Human)).